The following is a 730-amino-acid chain: Neuroligin-like protein glit-1 (730 aa).

The signal sequence occupies residues 1 to 18 (MFTGTIFNSLFTLPLVIS). The Extracellular portion of the chain corresponds to 19–663 (QFVPPPTRPV…EIMVFKWITG (645 aa)). 7 N-linked (GlcNAc...) asparagine glycosylation sites follow: Asn-103, Asn-320, Asn-445, Asn-512, Asn-557, Asn-564, and Asn-604. The helical transmembrane segment at 664-684 (VNVIIIALLIVLAGAFGYMVW) threads the bilayer. Residues 685–730 (GNKEDEEAAYKAENHQLVEYRDTGHSVSDATISSRTRSPRSRITNL) lie on the Cytoplasmic side of the membrane.

It belongs to the type-B carboxylesterase/lipase family. In terms of tissue distribution, expressed in the pharynx, intestine, and in several cells in the head including dopaminergic neurons.

Its subcellular location is the cell membrane. Functionally, probable neuronal cell surface protein thought to be involved in cell-cell-interactions. Confers protection against oxidative stress. Plays a role in protecting dopaminergic neurons against oxidative stress-induced neurodegeneration. This Caenorhabditis elegans protein is Neuroligin-like protein glit-1.